A 377-amino-acid chain; its full sequence is cAMP-dependent protein kinase type II regulatory subunit (377 aa).

Positions 48 to 69 (ERPSVSHTDQSTDDQLSVNSQD) are enriched in polar residues. The disordered stretch occupies residues 48–78 (ERPSVSHTDQSTDDQLSVNSQDADAEPPVMA). 5 positions are modified to phosphoserine: serine 51, serine 58, serine 64, serine 67, and serine 84. The Pseudophosphorylation motif signature appears at 81–85 (RRKSV). Tyrosine 90 carries the phosphotyrosine modification. Residues 124-239 (LFRS…LLNS), glutamate 189, arginine 198, 242-362 (MLKA…YESQ), glutamate 311, and arginine 320 contribute to the 3',5'-cyclic AMP site.

It belongs to the cAMP-dependent kinase regulatory chain family. As to quaternary structure, tetramer, composed of 2 regulatory (R) and 2 catalytic (C) subunits. In the presence of cAMP it dissociates into 2 active monomeric C subunits and an R dimer. Interacts with Akap200. The pseudophosphorylation site binds to the substrate-binding region of the catalytic chain but is not phosphorylated. The physiological significance of phosphorylations by other kinases is unclear. In terms of tissue distribution, detected in follicle cells, germline-derived cells, germline line stem cells and outer rim of ring canals of nurse cells throughout oogenesis (at protein level).

The protein localises to the cytoplasm. It is found in the cell membrane. In terms of biological role, regulatory subunit of the cAMP-dependent protein kinases involved in cAMP signaling in cells. Mediates membrane association by binding to anchoring proteins, such as Akap200. Might play an essential role in the regulation of neuronal activity in the brain. This Drosophila melanogaster (Fruit fly) protein is cAMP-dependent protein kinase type II regulatory subunit (Pka-R2).